Reading from the N-terminus, the 551-residue chain is Glucans biosynthesis protein D (551 aa).

A signal peptide (tat-type signal) is located at residues 1-32; that stretch reads MDRRRFIKGSMAMAAVCGTSGIASLFSQAAFA.

It belongs to the OpgD/OpgG family. Post-translationally, predicted to be exported by the Tat system. The position of the signal peptide cleavage has not been experimentally proven.

The protein resides in the periplasm. Its pathway is glycan metabolism; osmoregulated periplasmic glucan (OPG) biosynthesis. Probably involved in the control of the structural glucose backbone of osmoregulated periplasmic glucans (OPGs). The protein is Glucans biosynthesis protein D of Escherichia coli O9:H4 (strain HS).